Here is a 315-residue protein sequence, read N- to C-terminus: Methionyl-tRNA formyltransferase (315 aa).

111 to 114 (SLLP) serves as a coordination point for (6S)-5,6,7,8-tetrahydrofolate.

This sequence belongs to the Fmt family.

The enzyme catalyses L-methionyl-tRNA(fMet) + (6R)-10-formyltetrahydrofolate = N-formyl-L-methionyl-tRNA(fMet) + (6S)-5,6,7,8-tetrahydrofolate + H(+). In terms of biological role, attaches a formyl group to the free amino group of methionyl-tRNA(fMet). The formyl group appears to play a dual role in the initiator identity of N-formylmethionyl-tRNA by promoting its recognition by IF2 and preventing the misappropriation of this tRNA by the elongation apparatus. In Chlorobium phaeobacteroides (strain DSM 266 / SMG 266 / 2430), this protein is Methionyl-tRNA formyltransferase.